The chain runs to 490 residues: MLPNTGKLAGCTVFITGASRGIGKAIALKAAKDGANIVIAAKTTQKHPKLLGTIYTAAEEIEAAGGTALPCVVDVRDEQQINSAVEKAVEKFGGIDILVNNASAISLTNTLDTPTKRVDLMMNVNTRGTYLTSKACIPFLKKSKVGHILNLSPPLNLNPLWFKQHCAYTIAKYGMSMCVLGMAEEFRGEIAVNALWPRTAIHTAAMDMLGGSGVENQCRKVDIIADAAYSIFKRPKSFTGNFIIDENILKEEGIKNFDVYAIAPGHPLLPDFFLDEHPDAVMEEKESNDSVPEVKEEKLQLQEESQLQKQPQLQEQPQLQEKPQLQEKPQLQEQPQLQEKPQLQEQPQQREQPQLQQQPRPRQQPQPFVQSMLPQKPHFGAVEETFRIVKDSLSDEVVRATQAVYQFELSGEDGGTWFLDLKSKGGKVGHGEPSDRADVVMSMATDDFVKMFSGKLKPTMAFMSGKLKIKGNIALAIKLEKLMTQMNSRL.

Residues 17–23 (GASRGIG), Lys-42, and Asp-74 each bind NADP(+). Lys-42 bears the N6-(2-hydroxyisobutyryl)lysine mark. Residue Lys-116 is modified to N6-acetyllysine. Tyr-168 serves as the catalytic Proton acceptor. Lys-172 serves as a coordination point for NADP(+). Residues 282-301 (MEEKESNDSVPEVKEEKLQL) are compositionally biased toward basic and acidic residues. Positions 282-370 (MEEKESNDSV…PRQQPQPFVQ (89 aa)) are disordered. The segment covering 302 to 367 (QEESQLQKQP…QPRPRQQPQP (66 aa)) has biased composition (low complexity). In terms of domain architecture, SCP2 spans 380-487 (GAVEETFRIV…KLEKLMTQMN (108 aa)). An N6-succinyllysine modification is found at Lys-390.

Belongs to the short-chain dehydrogenases/reductases (SDR) family. In terms of tissue distribution, widely expressed.

Its subcellular location is the peroxisome. The protein resides in the mitochondrion. Functionally, has apparently no steroid dehydrogenase activity. Controls bile acid (BA) and lipid metabolism in response to nutritional cues. The chain is Hydroxysteroid dehydrogenase-like protein 2 (Hsdl2) from Mus musculus (Mouse).